Here is a 377-residue protein sequence, read N- to C-terminus: Beta sliding clamp (377 aa).

It belongs to the beta sliding clamp family. As to quaternary structure, forms a ring-shaped head-to-tail homodimer around DNA which binds and tethers DNA polymerases and other proteins to the DNA. The DNA replisome complex has a single clamp-loading complex (3 tau and 1 each of delta, delta', psi and chi subunits) which binds 3 Pol III cores (1 core on the leading strand and 2 on the lagging strand) each with a beta sliding clamp dimer. Additional proteins in the replisome are other copies of gamma, psi and chi, Ssb, DNA helicase and RNA primase.

Its subcellular location is the cytoplasm. In terms of biological role, confers DNA tethering and processivity to DNA polymerases and other proteins. Acts as a clamp, forming a ring around DNA (a reaction catalyzed by the clamp-loading complex) which diffuses in an ATP-independent manner freely and bidirectionally along dsDNA. Initially characterized for its ability to contact the catalytic subunit of DNA polymerase III (Pol III), a complex, multichain enzyme responsible for most of the replicative synthesis in bacteria; Pol III exhibits 3'-5' exonuclease proofreading activity. The beta chain is required for initiation of replication as well as for processivity of DNA replication. The polypeptide is Beta sliding clamp (dnaN) (Staphylococcus aureus (strain COL)).